Reading from the N-terminus, the 330-residue chain is Glycerol-3-phosphate dehydrogenase [NAD(P)+] (330 aa).

NADPH contacts are provided by Ser10, Trp11, Arg31, and Lys105. Positions 105, 135, and 137 each coordinate sn-glycerol 3-phosphate. An NADPH-binding site is contributed by Ala139. Sn-glycerol 3-phosphate contacts are provided by Lys190, Asp243, Ser253, Arg254, and Asn255. The active-site Proton acceptor is the Lys190. Residue Arg254 participates in NADPH binding. Positions 278 and 280 each coordinate NADPH.

The protein belongs to the NAD-dependent glycerol-3-phosphate dehydrogenase family.

Its subcellular location is the cytoplasm. It catalyses the reaction sn-glycerol 3-phosphate + NAD(+) = dihydroxyacetone phosphate + NADH + H(+). It carries out the reaction sn-glycerol 3-phosphate + NADP(+) = dihydroxyacetone phosphate + NADPH + H(+). The protein operates within membrane lipid metabolism; glycerophospholipid metabolism. Catalyzes the reduction of the glycolytic intermediate dihydroxyacetone phosphate (DHAP) to sn-glycerol 3-phosphate (G3P), the key precursor for phospholipid synthesis. The protein is Glycerol-3-phosphate dehydrogenase [NAD(P)+] of Nitratidesulfovibrio vulgaris (strain ATCC 29579 / DSM 644 / CCUG 34227 / NCIMB 8303 / VKM B-1760 / Hildenborough) (Desulfovibrio vulgaris).